A 243-amino-acid chain; its full sequence is Adenosylcobinamide-GDP ribazoletransferase (243 aa).

The next 5 membrane-spanning stretches (helical) occupy residues 31 to 51 (LLWYPAVGLLLGLLLWLAHLL), 61 to 81 (AAIILALWVGLSGGLHLDGLA), 109 to 129 (IAVVVLVLLLLLKFAALLSLL), 134 to 154 (GIYLVLLPWLGRSLLPLLLAT), and 188 to 208 (LLLGWGALIALATALALFVWL).

This sequence belongs to the CobS family. It depends on Mg(2+) as a cofactor.

Its subcellular location is the cell inner membrane. The catalysed reaction is alpha-ribazole + adenosylcob(III)inamide-GDP = adenosylcob(III)alamin + GMP + H(+). It carries out the reaction alpha-ribazole 5'-phosphate + adenosylcob(III)inamide-GDP = adenosylcob(III)alamin 5'-phosphate + GMP + H(+). The protein operates within cofactor biosynthesis; adenosylcobalamin biosynthesis; adenosylcobalamin from cob(II)yrinate a,c-diamide: step 7/7. Joins adenosylcobinamide-GDP and alpha-ribazole to generate adenosylcobalamin (Ado-cobalamin). Also synthesizes adenosylcobalamin 5'-phosphate from adenosylcobinamide-GDP and alpha-ribazole 5'-phosphate. This Ectopseudomonas mendocina (strain ymp) (Pseudomonas mendocina) protein is Adenosylcobinamide-GDP ribazoletransferase.